A 322-amino-acid chain; its full sequence is Germ cell-specific gene 1-like protein (322 aa).

At methionine 1–arginine 8 the chain is on the cytoplasmic side. The chain crosses the membrane as a helical span at residues serine 9–threonine 29. Residues serine 30–glycine 125 lie on the Extracellular side of the membrane. A helical membrane pass occupies residues valine 126–leucine 146. Residues leucine 147–alanine 166 are Cytoplasmic-facing. A helical membrane pass occupies residues phenylalanine 167 to methionine 187. Over threonine 188–glycine 209 the chain is Extracellular. Residues tryptophan 210 to leucine 230 form a helical membrane-spanning segment. Over asparagine 231–cysteine 322 the chain is Cytoplasmic.

This sequence belongs to the GSG1 family. As to quaternary structure, component of the AMPAR complex.

It is found in the cell membrane. The protein localises to the synapse. In terms of biological role, as a component of the AMPAR complex, modifies AMPA receptor (AMPAR) gating. This Xenopus tropicalis (Western clawed frog) protein is Germ cell-specific gene 1-like protein (gsg1l).